The primary structure comprises 182 residues: Large ribosomal subunit protein uL16 (182 aa).

This sequence belongs to the universal ribosomal protein uL16 family. As to quaternary structure, part of the 50S ribosomal subunit.

This Thermococcus kodakarensis (strain ATCC BAA-918 / JCM 12380 / KOD1) (Pyrococcus kodakaraensis (strain KOD1)) protein is Large ribosomal subunit protein uL16.